The primary structure comprises 339 residues: Phosphate acyltransferase (339 aa).

This sequence belongs to the PlsX family. In terms of assembly, homodimer. Probably interacts with PlsY.

The protein localises to the cytoplasm. The catalysed reaction is a fatty acyl-[ACP] + phosphate = an acyl phosphate + holo-[ACP]. Its pathway is lipid metabolism; phospholipid metabolism. Its function is as follows. Catalyzes the reversible formation of acyl-phosphate (acyl-PO(4)) from acyl-[acyl-carrier-protein] (acyl-ACP). This enzyme utilizes acyl-ACP as fatty acyl donor, but not acyl-CoA. This is Phosphate acyltransferase from Brachyspira hyodysenteriae (strain ATCC 49526 / WA1).